The chain runs to 124 residues: S-adenosylmethionine decarboxylase proenzyme (124 aa).

The active-site Schiff-base intermediate with substrate; via pyruvic acid is the Ser63. The residue at position 63 (Ser63) is a Pyruvic acid (Ser); by autocatalysis. The active-site Proton acceptor; for processing activity is His68. Cys83 serves as the catalytic Proton donor; for catalytic activity.

Belongs to the prokaryotic AdoMetDC family. Type 1 subfamily. Heterotetramer of two alpha and two beta chains arranged as a dimer of alpha/beta heterodimers. Requires pyruvate as cofactor. Is synthesized initially as an inactive proenzyme. Formation of the active enzyme involves a self-maturation process in which the active site pyruvoyl group is generated from an internal serine residue via an autocatalytic post-translational modification. Two non-identical subunits are generated from the proenzyme in this reaction, and the pyruvate is formed at the N-terminus of the alpha chain, which is derived from the carboxyl end of the proenzyme. The post-translation cleavage follows an unusual pathway, termed non-hydrolytic serinolysis, in which the side chain hydroxyl group of the serine supplies its oxygen atom to form the C-terminus of the beta chain, while the remainder of the serine residue undergoes an oxidative deamination to produce ammonia and the pyruvoyl group blocking the N-terminus of the alpha chain.

It carries out the reaction S-adenosyl-L-methionine + H(+) = S-adenosyl 3-(methylsulfanyl)propylamine + CO2. It functions in the pathway amine and polyamine biosynthesis; S-adenosylmethioninamine biosynthesis; S-adenosylmethioninamine from S-adenosyl-L-methionine: step 1/1. In terms of biological role, catalyzes the decarboxylation of S-adenosylmethionine to S-adenosylmethioninamine (dcAdoMet), the propylamine donor required for the synthesis of the polyamines spermine and spermidine from the diamine putrescine. In Thermoanaerobacter pseudethanolicus (strain ATCC 33223 / 39E) (Clostridium thermohydrosulfuricum), this protein is S-adenosylmethionine decarboxylase proenzyme.